Consider the following 195-residue polypeptide: Dephospho-CoA kinase (195 aa).

Residues 3–195 form the DPCK domain; that stretch reads KIGLTGGIGS…ANMKNVIAEI (193 aa). 11-16 contributes to the ATP binding site; that stretch reads GSGKST.

It belongs to the CoaE family.

The protein localises to the cytoplasm. The enzyme catalyses 3'-dephospho-CoA + ATP = ADP + CoA + H(+). It functions in the pathway cofactor biosynthesis; coenzyme A biosynthesis; CoA from (R)-pantothenate: step 5/5. Catalyzes the phosphorylation of the 3'-hydroxyl group of dephosphocoenzyme A to form coenzyme A. The polypeptide is Dephospho-CoA kinase (Corynebacterium glutamicum (Brevibacterium saccharolyticum)).